A 568-amino-acid polypeptide reads, in one-letter code: Urease subunit alpha (568 aa).

The 439-residue stretch at 130 to 568 (GGIDTHIHFI…LPMAQRYFLF (439 aa)) folds into the Urease domain. Ni(2+)-binding residues include H135, H137, and K218. K218 carries the N6-carboxylysine modification. H220 lines the substrate pocket. Ni(2+)-binding residues include H247 and H273. H321 (proton donor) is an active-site residue. A Ni(2+)-binding site is contributed by D361.

This sequence belongs to the metallo-dependent hydrolases superfamily. Urease alpha subunit family. In terms of assembly, heterotrimer of UreA (gamma), UreB (beta) and UreC (alpha) subunits. Three heterotrimers associate to form the active enzyme. It depends on Ni cation as a cofactor. In terms of processing, carboxylation allows a single lysine to coordinate two nickel ions.

It is found in the cytoplasm. The catalysed reaction is urea + 2 H2O + H(+) = hydrogencarbonate + 2 NH4(+). The protein operates within nitrogen metabolism; urea degradation; CO(2) and NH(3) from urea (urease route): step 1/1. In Burkholderia pseudomallei (strain 668), this protein is Urease subunit alpha.